The following is a 366-amino-acid chain: Phospho-2-dehydro-3-deoxyheptonate aldolase (366 aa).

The protein belongs to the class-I DAHP synthase family.

It carries out the reaction D-erythrose 4-phosphate + phosphoenolpyruvate + H2O = 7-phospho-2-dehydro-3-deoxy-D-arabino-heptonate + phosphate. The protein operates within metabolic intermediate biosynthesis; chorismate biosynthesis; chorismate from D-erythrose 4-phosphate and phosphoenolpyruvate: step 1/7. Functionally, stereospecific condensation of phosphoenolpyruvate (PEP) and D-erythrose-4-phosphate (E4P) giving rise to 3-deoxy-D-arabino-heptulosonate-7-phosphate (DAHP). The chain is Phospho-2-dehydro-3-deoxyheptonate aldolase (aroG) from Corynebacterium glutamicum (strain ATCC 13032 / DSM 20300 / JCM 1318 / BCRC 11384 / CCUG 27702 / LMG 3730 / NBRC 12168 / NCIMB 10025 / NRRL B-2784 / 534).